A 319-amino-acid polypeptide reads, in one-letter code: Alpha-hemolysin (319 aa).

An N-terminal signal peptide occupies residues 1–26; sequence MKTRIVSSVTTTLLLGSILMNPVANA.

Belongs to the aerolysin family. As to quaternary structure, self-assembles to form first a non-lytic oligomeric intermediate and then, a mushroom-shaped homoheptamer structure of 100 Angstroms in length and up to 100 Angstroms in diameter.

Its subcellular location is the secreted. In terms of biological role, alpha-toxin binds to the membrane of eukaryotic cells resulting in the release of low-molecular weight molecules and leading to an eventual osmotic lysis. Inhibits host neutrophil chemotaxis to the lesion region. Heptamer oligomerization and pore formation is required for lytic activity. This is Alpha-hemolysin (hly) from Staphylococcus aureus (strain NCTC 8325 / PS 47).